A 374-amino-acid chain; its full sequence is Histidinol-phosphate aminotransferase 2 (374 aa).

Lys-227 is modified (N6-(pyridoxal phosphate)lysine).

Belongs to the class-II pyridoxal-phosphate-dependent aminotransferase family. Histidinol-phosphate aminotransferase subfamily. Homodimer. Requires pyridoxal 5'-phosphate as cofactor.

The enzyme catalyses L-histidinol phosphate + 2-oxoglutarate = 3-(imidazol-4-yl)-2-oxopropyl phosphate + L-glutamate. Its pathway is amino-acid biosynthesis; L-histidine biosynthesis; L-histidine from 5-phospho-alpha-D-ribose 1-diphosphate: step 7/9. The polypeptide is Histidinol-phosphate aminotransferase 2 (hisC2) (Ralstonia nicotianae (strain ATCC BAA-1114 / GMI1000) (Ralstonia solanacearum)).